The following is a 198-amino-acid chain: Paired-like homeodomain transcription factor LEUTX (198 aa).

Residues 33 to 67 (PSLATMGKLASKLQLDLSVVKIWFKNQRAKWKRQQ) constitute a DNA-binding region (homeobox). The interval 65–133 (RQQRQQMQTR…PGGASASARV (69 aa)) is disordered. Positions 79–190 (PANQTTSVKK…NQYLFPVCLE (112 aa)) are LEUTX region. Residues 110 to 119 (ANDHDLREPS) show a composition bias toward basic and acidic residues. 4 short sequence motifs (9aaTAD) span residues 125 to 136 (GGASASARVSSW), 153 to 161 (PPWASTLFE), 163 to 171 (DEFVKIYDL), and 178 to 186 (SSLNQYLFP).

It belongs to the paired homeobox family.

It is found in the nucleus. Paired-like homeobox transcription factor involved in embryogenesis. May act as a regulator of embryo genome activation. Binds to a 36 bp DNA elements containing a 5'-TAATCC-3' sequence motif, referred to as EEA motif (EGA-enriched Alu-motif), present in the promoters of target genes activated in early embryos. Functionally, inactive transcriptional activity. The chain is Paired-like homeodomain transcription factor LEUTX from Homo sapiens (Human).